Here is a 306-residue protein sequence, read N- to C-terminus: Pantothenate kinase (306 aa).

91–98 (GSVAVGKS) lines the ATP pocket.

This sequence belongs to the prokaryotic pantothenate kinase family.

The protein resides in the cytoplasm. The catalysed reaction is (R)-pantothenate + ATP = (R)-4'-phosphopantothenate + ADP + H(+). It participates in cofactor biosynthesis; coenzyme A biosynthesis; CoA from (R)-pantothenate: step 1/5. This chain is Pantothenate kinase, found in Streptococcus equi subsp. zooepidemicus (strain H70).